The following is a 224-amino-acid chain: PKHD-type hydroxylase Shewmr7_0698 (224 aa).

Residues glutamine 78–serine 176 enclose the Fe2OG dioxygenase domain. 3 residues coordinate Fe cation: histidine 96, aspartate 98, and histidine 157. Position 167 (arginine 167) interacts with 2-oxoglutarate.

The cofactor is Fe(2+). L-ascorbate serves as cofactor.

The protein is PKHD-type hydroxylase Shewmr7_0698 of Shewanella sp. (strain MR-7).